Consider the following 318-residue polypeptide: tRNA methyltransferase 10 homolog B (318 aa).

Basic and acidic residues predominate over residues 1-10 (MDCKSEESAQ). The interval 1–105 (MDCKSEESAQ…DPGNGTCPQH (105 aa)) is disordered. Positions 52–63 (SPANSAVWSSKN) are enriched in polar residues. The span at 64–83 (MQRKQRHWERIVSSKKSKRK) shows a compositional bias: basic residues. Positions 72-93 (ERIVSSKKSKRKQERERRKAKR) form a coiled coil. The segment covering 84–96 (QERERRKAKRAED) has biased composition (basic and acidic residues). The region spanning 114-311 (TKEKLLEAKH…KGVSPGKGYV (198 aa)) is the SAM-dependent MTase TRM10-type domain.

This sequence belongs to the class IV-like SAM-binding methyltransferase superfamily. TRM10 family.

It catalyses the reaction guanosine(9) in tRNA + S-adenosyl-L-methionine = N(1)-methylguanosine(9) in tRNA + S-adenosyl-L-homocysteine + H(+). Functionally, S-adenosyl-L-methionine-dependent guanine N(1)-methyltransferase that catalyzes the formation of N(1)-methylguanine at position 9 (m1G9) in tRNAs. Probably not able to catalyze formation of N(1)-methyladenine at position 9 (m1A9) in tRNAs. This is tRNA methyltransferase 10 homolog B (Trmt10b) from Mus musculus (Mouse).